Consider the following 315-residue polypeptide: Ribosomal RNA small subunit methyltransferase H (315 aa).

Residues 33–35 (GGH), Asp-52, Phe-84, Asp-106, and Gln-113 contribute to the S-adenosyl-L-methionine site. Residues 295-315 (SDELEENNRSHSAKLRVAEKL) form a disordered region.

This sequence belongs to the methyltransferase superfamily. RsmH family.

It localises to the cytoplasm. It catalyses the reaction cytidine(1402) in 16S rRNA + S-adenosyl-L-methionine = N(4)-methylcytidine(1402) in 16S rRNA + S-adenosyl-L-homocysteine + H(+). Functionally, specifically methylates the N4 position of cytidine in position 1402 (C1402) of 16S rRNA. In Lactobacillus gasseri (strain ATCC 33323 / DSM 20243 / BCRC 14619 / CIP 102991 / JCM 1131 / KCTC 3163 / NCIMB 11718 / NCTC 13722 / AM63), this protein is Ribosomal RNA small subunit methyltransferase H.